Consider the following 832-residue polypeptide: Protein monoglycylase TTLL8 (832 aa).

Over residues 1 to 13 (MSCPPTPNPPFRP) the composition is skewed to pro residues. Disordered stretches follow at residues 1–84 (MSCP…QDLS) and 277–304 (GKSK…KLPS). 3 stretches are compositionally biased toward basic and acidic residues: residues 46–59 (QLRE…ERKK), 66–75 (DGDHKEENKL), and 280–299 (KKEE…ENPD). The 354-residue stretch at 271–624 (YCSKVKGKSK…RKLDRNCDIG (354 aa)) folds into the TTL domain. ATP is bound by residues K397, 403 to 404 (RG), 435 to 438 (QKYI), 448 to 450 (KFD), and 492 to 493 (CN). R403 serves as a coordination point for a protein. Residue S495 coordinates L-glutamate. The Mg(2+) site is built by D570, E583, and N585. E583 serves as a coordination point for ATP.

Mg(2+) is required as a cofactor. In terms of tissue distribution, highly expressed in testis. Expressed in brain, heart, kidney, liver, lung, muscle, spleen and trachea. Expressed in sperm flagellum. In the brain, specifically expressed in ependymal cilia.

It is found in the cytoplasm. The protein localises to the cytoskeleton. It localises to the cell projection. Its subcellular location is the cilium. The protein resides in the cilium axoneme. It is found in the flagellum axoneme. The enzyme catalyses L-glutamyl-[protein] + glycine + ATP = glycyl-L-glutamyl-[protein] + ADP + phosphate + H(+). Monoglycylase which modifies both tubulin and non-tubulin proteins, adding a single glycine on the gamma-carboxyl groups of specific glutamate residues to generate monoglycine side chains within the C-terminal tail of target proteins. Not involved in elongation step of the polyglycylation reaction. Preferentially monoglycylates alpha-tubulin over beta-tubulin. Together with TTLL3, mediates microtubule glycylation of primary and motile cilia, which is essential for their stability and maintenance. Together with TTLL3, glycylates sperm flagella which regulates axonemal dynein motor activity, thereby controlling flagellar beat, directional sperm swimming and male fertility. Monoglycylates non-tubulin proteins such as ANP32A, ANP32B, SET, NCL and NAP1. This chain is Protein monoglycylase TTLL8, found in Mus musculus (Mouse).